The sequence spans 202 residues: Tumor necrosis factor alpha-induced protein 8-like protein 3 (202 aa).

A compositionally biased stretch (acidic residues) spans 1–10; that stretch reads MDTDSGDLSE. Residues 1-24 are disordered; sequence MDTDSGDLSEGELSPGPEQFSSKS.

It belongs to the TNFAIP8 family.

The protein resides in the cytoplasm. It localises to the cell membrane. May act as a lipid transfer protein. The protein is Tumor necrosis factor alpha-induced protein 8-like protein 3 (tnfaip8l3) of Xenopus laevis (African clawed frog).